A 74-amino-acid chain; its full sequence is MSGTGVLLLTLLLLVAMAASDMLSSLIQAHERDSEESCKSYGGGPCPSGEDCCCPPGRSTGTCKRTCNNGSVCA.

The signal sequence occupies residues 1-19 (MSGTGVLLLTLLLLVAMAA).

Post-translationally, may contain 4 disulfide bonds. As to expression, expressed by the venom duct.

It is found in the secreted. In terms of biological role, probable neurotoxin. The sequence is that of Conotoxin Cal27 from Californiconus californicus (California cone).